The primary structure comprises 209 residues: Thymidine kinase (209 aa).

ATP-binding positions include 9–16 and 88–91; these read SAMNAGKT and DEAQ. E89 serves as the catalytic Proton acceptor.

Belongs to the thymidine kinase family. In terms of assembly, homotetramer.

The protein localises to the cytoplasm. The enzyme catalyses thymidine + ATP = dTMP + ADP + H(+). The sequence is that of Thymidine kinase from Xanthomonas axonopodis pv. citri (strain 306).